The primary structure comprises 523 residues: Alpha,alpha-trehalose-phosphate synthase [UDP-forming] (523 aa).

Residues tyrosine 98 and aspartate 152 each contribute to the D-glucose 6-phosphate site. The UDP site is built by arginine 288 and lysine 293. The UDP-alpha-D-glucose site is built by arginine 288 and lysine 293. Arginine 326 serves as a coordination point for D-glucose 6-phosphate. 387–395 (DGMNLVSYE) lines the UDP-alpha-D-glucose pocket. Residue 391-395 (LVSYE) coordinates UDP. Positions 503–523 (QQFNLGEQREEGRLEPGEFDD) are disordered. Residues 509-523 (EQREEGRLEPGEFDD) show a composition bias toward basic and acidic residues.

Belongs to the glycosyltransferase 20 family.

The enzyme catalyses D-glucose 6-phosphate + UDP-alpha-D-glucose = alpha,alpha-trehalose 6-phosphate + UDP + H(+). Its pathway is carbohydrate biosynthesis. Its function is as follows. Synthase catalytic subunit of the trehalose synthase complex that catalyzes the production of trehalose from glucose-6-phosphate and UDP-alpha-D-glucose in a two step process. The disaccharide trehalose serves as a storage carbohydrate that is mobilized during conidial germination. Trehalose also serves as a protectant for cell integrity during stress. This is Alpha,alpha-trehalose-phosphate synthase [UDP-forming] from Botryotinia fuckeliana (strain B05.10) (Noble rot fungus).